Reading from the N-terminus, the 478-residue chain is Cytochrome c-552 (478 aa).

The signal sequence occupies residues 1–26; that stretch reads MARKTLRARRFFSLIFPFFFITSVYA. H94 contributes to the heme c binding site. 3 residues coordinate heme: C122, C125, and K126. Heme c is bound by residues C160, C163, H164, C209, C212, and H213. Ca(2+) is bound by residues E215, Y216, K261, and Q263. A substrate-binding site is contributed by Y216. H264 contributes to the substrate binding site. 9 residues coordinate heme c: H275, C282, C285, H286, H301, C314, C317, H318, and H393.

The protein belongs to the cytochrome c-552 family. It depends on Ca(2+) as a cofactor. Heme c is required as a cofactor.

It is found in the periplasm. The enzyme catalyses 6 Fe(III)-[cytochrome c] + NH4(+) + 2 H2O = 6 Fe(II)-[cytochrome c] + nitrite + 8 H(+). The protein operates within nitrogen metabolism; nitrate reduction (assimilation). Its function is as follows. Catalyzes the reduction of nitrite to ammonia, consuming six electrons in the process. The polypeptide is Cytochrome c-552 (Salmonella paratyphi C (strain RKS4594)).